Here is a 546-residue protein sequence, read N- to C-terminus: Probable protein kinase UbiB (546 aa).

A Protein kinase domain is found at Asp124–Leu502. ATP contacts are provided by residues Leu130–Val138 and Lys153. Asp288 acts as the Proton acceptor in catalysis. 2 helical membrane passes run Tyr501–Pro521 and Glu522–Trp542.

Belongs to the ABC1 family. UbiB subfamily.

It is found in the cell inner membrane. It functions in the pathway cofactor biosynthesis; ubiquinone biosynthesis [regulation]. In terms of biological role, is probably a protein kinase regulator of UbiI activity which is involved in aerobic coenzyme Q (ubiquinone) biosynthesis. This Escherichia fergusonii (strain ATCC 35469 / DSM 13698 / CCUG 18766 / IAM 14443 / JCM 21226 / LMG 7866 / NBRC 102419 / NCTC 12128 / CDC 0568-73) protein is Probable protein kinase UbiB.